The chain runs to 318 residues: MTRHLLAAGDLSRDDATAILDDADRFAQALVGREIKKLPTLRGRTVVTMFYENSTRTRVSFEVAGKWMSADVINVSAAGSSVGKGESLRDTALTLRAAGADALIIRHPASGAAHLLAEWTCGNGDSSDAGPSVINAGDGTHEHPTQALLDALTIRQRLGGIEGRRVVIVGDVLHSRVARSNVMLLSTLGAEVVLVAPPTLLPVGVEGWPVTVSNDFDAELPAADAVLMLRVQAERMNGGFFPSVREYSSLYGLSDRRQAMLPGHAVVLHPGPMLRGMEIASSVADSSQSAVLQQVSNGVHVRMAVLFHVLVGAEEIAA.

Carbamoyl phosphate contacts are provided by R56 and T57. Position 84 (K84) interacts with L-aspartate. Carbamoyl phosphate is bound by residues R106, H143, and Q146. Residues R176 and R230 each contribute to the L-aspartate site. Carbamoyl phosphate is bound by residues G271 and P272.

The protein belongs to the aspartate/ornithine carbamoyltransferase superfamily. ATCase family. In terms of assembly, heterododecamer (2C3:3R2) of six catalytic PyrB chains organized as two trimers (C3), and six regulatory PyrI chains organized as three dimers (R2).

It catalyses the reaction carbamoyl phosphate + L-aspartate = N-carbamoyl-L-aspartate + phosphate + H(+). Its pathway is pyrimidine metabolism; UMP biosynthesis via de novo pathway; (S)-dihydroorotate from bicarbonate: step 2/3. In terms of biological role, catalyzes the condensation of carbamoyl phosphate and aspartate to form carbamoyl aspartate and inorganic phosphate, the committed step in the de novo pyrimidine nucleotide biosynthesis pathway. This chain is Aspartate carbamoyltransferase catalytic subunit, found in Mycobacterium avium (strain 104).